A 471-amino-acid polypeptide reads, in one-letter code: Glutamate--tRNA ligase (471 aa).

The 'HIGH' region signature appears at 9 to 19 (PSPTGYLHVGG). The Zn(2+) site is built by Cys98, Cys100, Cys125, and Asp127. Residues 237 to 241 (KLSKR) carry the 'KMSKS' region motif. An ATP-binding site is contributed by Lys240.

This sequence belongs to the class-I aminoacyl-tRNA synthetase family. Glutamate--tRNA ligase type 1 subfamily. In terms of assembly, monomer. It depends on Zn(2+) as a cofactor.

It is found in the cytoplasm. It carries out the reaction tRNA(Glu) + L-glutamate + ATP = L-glutamyl-tRNA(Glu) + AMP + diphosphate. Catalyzes the attachment of glutamate to tRNA(Glu) in a two-step reaction: glutamate is first activated by ATP to form Glu-AMP and then transferred to the acceptor end of tRNA(Glu). This is Glutamate--tRNA ligase from Yersinia pseudotuberculosis serotype O:1b (strain IP 31758).